Here is a 154-residue protein sequence, read N- to C-terminus: Large ribosomal subunit protein uL13 (154 aa).

This sequence belongs to the universal ribosomal protein uL13 family. Part of the 50S ribosomal subunit.

Functionally, this protein is one of the early assembly proteins of the 50S ribosomal subunit, although it is not seen to bind rRNA by itself. It is important during the early stages of 50S assembly. This Cereibacter sphaeroides (strain ATCC 17029 / ATH 2.4.9) (Rhodobacter sphaeroides) protein is Large ribosomal subunit protein uL13.